We begin with the raw amino-acid sequence, 725 residues long: Catalase-peroxidase 1 (725 aa).

The segment at residues 96–224 is a cross-link (tryptophyl-tyrosyl-methioninium (Trp-Tyr) (with M-250)); that stretch reads WHSAGSYRLA…LAAVQMGLIY (129 aa). His97 (proton acceptor) is an active-site residue. Residues 224 to 250 constitute a cross-link (tryptophyl-tyrosyl-methioninium (Tyr-Met) (with W-96)); it reads YVNPEGVDGNPDPLRTAKDVRETFKRM. Residue His265 coordinates heme b.

It belongs to the peroxidase family. Peroxidase/catalase subfamily. In terms of assembly, homodimer or homotetramer. Heme b serves as cofactor. In terms of processing, formation of the three residue Trp-Tyr-Met cross-link is important for the catalase, but not the peroxidase activity of the enzyme.

It catalyses the reaction H2O2 + AH2 = A + 2 H2O. The enzyme catalyses 2 H2O2 = O2 + 2 H2O. Bifunctional enzyme with both catalase and broad-spectrum peroxidase activity. The chain is Catalase-peroxidase 1 from Idiomarina loihiensis (strain ATCC BAA-735 / DSM 15497 / L2-TR).